Reading from the N-terminus, the 320-residue chain is MRQTKTGILLANLGTPDAPTPEAVKRYLKQFLSDRRVVDTSRLLWWPLLRGVILPLRSPRVAKLYASVWMEGGSPLMVYSRQQQQALAQRLPETPVALGMSYGSPSLESAVDELLAEHVDHIVVLPLYPQFSCSTVGAVWDELARILARKRSIPGISFIRDYADNHDYINALANSVRASFAKHGEPDLLLLSYHGIPQRYADEGDDYPQRCRTTTRELASALGMAPEKVMMTFQSRFGREPWLMPYTDETLKMLGEKGVGHIQVMCPGFAADCLETLEEIAEQNREVFLGAGGKKYEYIPALNATPEYIEMMANLVAAYR.

Fe cation contacts are provided by His-194 and Glu-275.

Belongs to the ferrochelatase family. As to quaternary structure, monomer.

The protein localises to the cytoplasm. The enzyme catalyses heme b + 2 H(+) = protoporphyrin IX + Fe(2+). It participates in porphyrin-containing compound metabolism; protoheme biosynthesis; protoheme from protoporphyrin-IX: step 1/1. In terms of biological role, catalyzes the ferrous insertion into protoporphyrin IX. The sequence is that of Ferrochelatase from Shigella boydii serotype 4 (strain Sb227).